The primary structure comprises 274 residues: MAIVKCKPTSPGRRHVVKIVNADLHKGKPYAPLLEKNSKSGGRNNNGRITVRHVGGGHKQHYRLIDFKRTKDGIPAIVERLEYDPNRSANIALVLFADGERRYIIAPKGLKAGDTVQSGVDAPIKAGNCLPLRNIPVGSTVHCVELKPGKGAQVARSAGAYAQIIARDGAYVTLRLRSGEMRKVLSEGRATIGEVGNSEHMLRELGKAGATRWRGVRPTVRGVAMNPVDHPHGGGEGRTSGGRHPVSPWGMPTKGFKTRKNKSTDKYIVRRRNK.

A disordered region spans residues 223 to 274; sequence VAMNPVDHPHGGGEGRTSGGRHPVSPWGMPTKGFKTRKNKSTDKYIVRRRNK.

It belongs to the universal ribosomal protein uL2 family. In terms of assembly, part of the 50S ribosomal subunit. Forms a bridge to the 30S subunit in the 70S ribosome.

One of the primary rRNA binding proteins. Required for association of the 30S and 50S subunits to form the 70S ribosome, for tRNA binding and peptide bond formation. It has been suggested to have peptidyltransferase activity; this is somewhat controversial. Makes several contacts with the 16S rRNA in the 70S ribosome. The protein is Large ribosomal subunit protein uL2 of Aliivibrio salmonicida (strain LFI1238) (Vibrio salmonicida (strain LFI1238)).